The primary structure comprises 71 residues: Large ribosomal subunit protein bL28 (71 aa).

The protein belongs to the bacterial ribosomal protein bL28 family.

In Finegoldia magna (strain ATCC 29328 / DSM 20472 / WAL 2508) (Peptostreptococcus magnus), this protein is Large ribosomal subunit protein bL28.